Reading from the N-terminus, the 518-residue chain is Hyccin (518 aa).

Disordered stretches follow at residues 385-410 (GLRRLTGRSSKEKDKEKDAATGMDQL) and 466-492 (VFSGNQPSSRASSPTSNHVAEQDEGVA). The segment covering 393-403 (SSKEKDKEKDA) has biased composition (basic and acidic residues). Residues 466-484 (VFSGNQPSSRASSPTSNHV) show a composition bias toward polar residues.

It belongs to the Hyccin family. As to quaternary structure, component of a phosphatidylinositol 4-kinase (PI4K) complex.

It localises to the cytoplasm. The protein localises to the cytosol. Its subcellular location is the cell membrane. In terms of biological role, component of a complex required to localize phosphatidylinositol 4-kinase (PI4K) to the plasma membrane. The complex acts as a regulator of phosphatidylinositol 4-phosphate (PtdIns(4)P) synthesis. In Danio rerio (Zebrafish), this protein is Hyccin (hycc1).